A 553-amino-acid chain; its full sequence is Adenine deaminase (553 aa).

Belongs to the metallo-dependent hydrolases superfamily. Adenine deaminase family. The cofactor is Mn(2+).

The enzyme catalyses adenine + H2O + H(+) = hypoxanthine + NH4(+). This chain is Adenine deaminase, found in Methanosarcina acetivorans (strain ATCC 35395 / DSM 2834 / JCM 12185 / C2A).